The primary structure comprises 391 residues: UPF0229 protein BAA_0633 (391 aa).

Residues 1 to 16 (MGEENQPNYTISQENW) show a composition bias toward polar residues. Disordered stretches follow at residues 1–31 (MGEE…RHQE) and 80–117 (HVGQ…GDAA). The span at 21–31 (KGYDDQQRHQE) shows a compositional bias: basic and acidic residues. Residues 98 to 115 (GSGGQKQKGPGKGQGAGD) show a composition bias toward gly residues.

Belongs to the UPF0229 family.

This Bacillus anthracis (strain A0248) protein is UPF0229 protein BAA_0633.